The following is a 498-amino-acid chain: WD repeat-containing protein 55 homolog (498 aa).

The tract at residues 1-131 (MHTHNNFKTP…ATFDLDEDDE (131 aa)) is disordered. Acidic residues-rich tracts occupy residues 12–23 (DEDELDDLDEDM) and 31–48 (IEQE…EYDL). 2 stretches are compositionally biased toward low complexity: residues 67–82 (NDSS…NAAD) and 93–103 (AGGVTAGGATS). 6 WD repeats span residues 154–193 (KLED…NKLL), 198–237 (VHSK…LKKL), 241–279 (AHDD…AIFE), 282–321 (ELED…MYVQ), 324–363 (PYEE…YHCD), and 408–447 (QHNM…DFGD). The disordered stretch occupies residues 478 to 498 (DLTKENADGDDDPGAGPSNMA).

This sequence belongs to the WD repeat WDR55 family.

This is WD repeat-containing protein 55 homolog from Drosophila melanogaster (Fruit fly).